The sequence spans 380 residues: Probable protein phosphatase 2C 27 (380 aa).

The 261-residue stretch at 84–344 (RSGSCAEQGA…DNLTVIVVCF (261 aa)) folds into the PPM-type phosphatase domain. 4 residues coordinate Mn(2+): D128, G129, D292, and D335.

This sequence belongs to the PP2C family. The cofactor is Mg(2+). It depends on Mn(2+) as a cofactor. As to expression, expressed in roots, leaves, stems, flower, and trichomes.

The protein localises to the nucleus. Its subcellular location is the cytoplasm. The catalysed reaction is O-phospho-L-seryl-[protein] + H2O = L-seryl-[protein] + phosphate. It catalyses the reaction O-phospho-L-threonyl-[protein] + H2O = L-threonyl-[protein] + phosphate. Confers salt tolerance by triggering the expression of stress-responsive genes. This Arabidopsis thaliana (Mouse-ear cress) protein is Probable protein phosphatase 2C 27.